Reading from the N-terminus, the 210-residue chain is Acetoin utilization protein AcuA (210 aa).

The N-acetyltransferase domain occupies 20-161 (LIEGPVSPED…YRKIMEKMMN (142 aa)).

Belongs to the acetyltransferase family. Monomer.

The protein operates within ketone degradation; acetoin degradation. With respect to regulation, activity is sensitive to salt concentration, a high concentration of KCL (500 mM) is needed for complete inactivation. Functionally, part of the acuABC operon, which is possibly involved in the breakdown of acetoin and butanediol. Acts as an acetyltransferase inactivating acetyl-CoA synthetase AcsA via acetylation at a Lys residue. The polypeptide is Acetoin utilization protein AcuA (acuA) (Bacillus subtilis (strain 168)).